The chain runs to 347 residues: NADH-ubiquinone oxidoreductase chain 2 (347 aa).

10 helical membrane-spanning segments follow: residues 13–33 (IVLGTMIVMTSSHWLMIWMGF), 59–79 (YFLTQATASMLLMLAIIINLV), 96–116 (IIMTVALAMKMGLAPFHFWVP), 122–142 (ISLLSGLILLTWQKLAPLSVL), 144–164 (VISPIINLDLLLTMSILSILI), 178–200 (ILAYSSIAHMGWMTSILIFNPMM), 210–232 (LMTATTFTLFMTTSTTTTLALSH), 246–266 (IIMLSLGGLPPLVGFLPKWMI), 276–296 (IILATLMAITALLNLFFYMRL), and 326–346 (LPMLIVLSTMTLPLAPAMILL).

Belongs to the complex I subunit 2 family. As to quaternary structure, core subunit of respiratory chain NADH dehydrogenase (Complex I) which is composed of 45 different subunits. Interacts with TMEM242.

The protein localises to the mitochondrion inner membrane. It catalyses the reaction a ubiquinone + NADH + 5 H(+)(in) = a ubiquinol + NAD(+) + 4 H(+)(out). In terms of biological role, core subunit of the mitochondrial membrane respiratory chain NADH dehydrogenase (Complex I) which catalyzes electron transfer from NADH through the respiratory chain, using ubiquinone as an electron acceptor. Essential for the catalytic activity and assembly of complex I. This is NADH-ubiquinone oxidoreductase chain 2 from Rhynchonycteris naso (Brazilian long-nosed bat).